Consider the following 31-residue polypeptide: Cytochrome b6-f complex subunit 6 (31 aa).

The chain crosses the membrane as a helical span at residues Ile-3–Phe-23.

The protein belongs to the PetL family. The 4 large subunits of the cytochrome b6-f complex are cytochrome b6, subunit IV (17 kDa polypeptide, PetD), cytochrome f and the Rieske protein, while the 4 small subunits are PetG, PetL, PetM and PetN. The complex functions as a dimer.

The protein localises to the plastid. It is found in the chloroplast thylakoid membrane. Functionally, component of the cytochrome b6-f complex, which mediates electron transfer between photosystem II (PSII) and photosystem I (PSI), cyclic electron flow around PSI, and state transitions. PetL is important for photoautotrophic growth as well as for electron transfer efficiency and stability of the cytochrome b6-f complex. The protein is Cytochrome b6-f complex subunit 6 of Rhodomonas salina (Cryptomonas salina).